The chain runs to 323 residues: Elongation factor P--(R)-beta-lysine ligase (323 aa).

Residue 76 to 78 coordinates substrate; sequence SPE. ATP contacts are provided by residues 100-102 and Asn109; that span reads RNE. Position 118 (Tyr118) interacts with substrate. 242-243 contributes to the ATP binding site; that stretch reads EL. Glu249 provides a ligand contact to substrate. Gly298 is an ATP binding site.

It belongs to the class-II aminoacyl-tRNA synthetase family. EpmA subfamily. In terms of assembly, homodimer.

The enzyme catalyses D-beta-lysine + L-lysyl-[protein] + ATP = N(6)-((3R)-3,6-diaminohexanoyl)-L-lysyl-[protein] + AMP + diphosphate + H(+). Its function is as follows. With EpmB is involved in the beta-lysylation step of the post-translational modification of translation elongation factor P (EF-P). Catalyzes the ATP-dependent activation of (R)-beta-lysine produced by EpmB, forming a lysyl-adenylate, from which the beta-lysyl moiety is then transferred to the epsilon-amino group of a conserved specific lysine residue in EF-P. The chain is Elongation factor P--(R)-beta-lysine ligase from Actinobacillus succinogenes (strain ATCC 55618 / DSM 22257 / CCUG 43843 / 130Z).